The following is a 44-amino-acid chain: MNDFEKNVQSKRNDAVDSAVGFVVSFGFFAFLFVMATVIHLVGS.

The chain crosses the membrane as a helical span at residues 19–39 (AVGFVVSFGFFAFLFVMATVI).

The protein localises to the cell membrane. This is an uncharacterized protein from Bacillus subtilis (strain 168).